A 363-amino-acid chain; its full sequence is Aminomethyltransferase (363 aa).

Belongs to the GcvT family. In terms of assembly, the glycine cleavage system is composed of four proteins: P, T, L and H.

It catalyses the reaction N(6)-[(R)-S(8)-aminomethyldihydrolipoyl]-L-lysyl-[protein] + (6S)-5,6,7,8-tetrahydrofolate = N(6)-[(R)-dihydrolipoyl]-L-lysyl-[protein] + (6R)-5,10-methylene-5,6,7,8-tetrahydrofolate + NH4(+). Functionally, the glycine cleavage system catalyzes the degradation of glycine. The polypeptide is Aminomethyltransferase (Saccharophagus degradans (strain 2-40 / ATCC 43961 / DSM 17024)).